Consider the following 169-residue polypeptide: Adenine phosphoribosyltransferase (169 aa).

The protein belongs to the purine/pyrimidine phosphoribosyltransferase family. Homodimer.

The protein resides in the cytoplasm. It carries out the reaction AMP + diphosphate = 5-phospho-alpha-D-ribose 1-diphosphate + adenine. It participates in purine metabolism; AMP biosynthesis via salvage pathway; AMP from adenine: step 1/1. In terms of biological role, catalyzes a salvage reaction resulting in the formation of AMP, that is energically less costly than de novo synthesis. The chain is Adenine phosphoribosyltransferase from Mycoplasmopsis synoviae (strain 53) (Mycoplasma synoviae).